A 164-amino-acid chain; its full sequence is MSDKIGLFTGSFDPMTKGHVDLIERASRLFDKLYVGIFYNREKSGFFTIEARERIVKEALQHLDNVEVITSQNELAVTVARRLGAKAFVRGLRNSQDLDYEADMTFFNRELAGELETIFLLSKPAYQHISSSRIRELIAFQQDIADYVPQSVIKELERRTYEKN.

Substrate is bound at residue Ser11. ATP-binding positions include 11–12 (SF) and His19. Positions 43, 76, and 90 each coordinate substrate. ATP-binding positions include 91–93 (GLR), Glu101, and 126–132 (YQHISSS).

Belongs to the bacterial CoaD family. Homohexamer. Requires Mg(2+) as cofactor.

The protein localises to the cytoplasm. The enzyme catalyses (R)-4'-phosphopantetheine + ATP + H(+) = 3'-dephospho-CoA + diphosphate. Its pathway is cofactor biosynthesis; coenzyme A biosynthesis; CoA from (R)-pantothenate: step 4/5. Functionally, reversibly transfers an adenylyl group from ATP to 4'-phosphopantetheine, yielding dephospho-CoA (dPCoA) and pyrophosphate. This is Phosphopantetheine adenylyltransferase from Streptococcus gordonii (strain Challis / ATCC 35105 / BCRC 15272 / CH1 / DL1 / V288).